Here is a 453-residue protein sequence, read N- to C-terminus: Carbamoyl phosphate synthase arginine-specific small chain (453 aa).

The transit peptide at 1-13 directs the protein to the mitochondrion; sequence MFSKLAANFAQRA. Residues 233–420 form the Glutamine amidotransferase type-1 domain; that stretch reads HVALIDCGVK…LENVRAAKSA (188 aa). C309 serves as the catalytic Nucleophile. Residues H393 and E395 contribute to the active site.

It belongs to the CarA family. Heterodimer composed of 2 chains; the small (or glutamine) chain promotes the hydrolysis of glutamine to ammonia, which is used by the large (or ammonia) chain to synthesize carbamoyl phosphate.

It localises to the mitochondrion matrix. It catalyses the reaction hydrogencarbonate + L-glutamine + 2 ATP + H2O = carbamoyl phosphate + L-glutamate + 2 ADP + phosphate + 2 H(+). It carries out the reaction L-glutamine + H2O = L-glutamate + NH4(+). Its pathway is amino-acid biosynthesis; L-arginine biosynthesis; carbamoyl phosphate from bicarbonate: step 1/1. In terms of biological role, small subunit of the arginine-specific carbamoyl phosphate synthase (CPSase). CPSase catalyzes the formation of carbamoyl phosphate from the ammonia moiety of glutamine, carbonate, and phosphate donated by ATP, the first step of the arginine biosynthetic pathway. The small subunit (glutamine amidotransferase) binds and cleaves glutamine to supply the large subunit with the substrate ammonia. This is Carbamoyl phosphate synthase arginine-specific small chain (cpa1) from Hypocrea virens (Gliocladium virens).